The sequence spans 353 residues: (3aS,4S,5R,7aS)-5-hydroxy-7a-methyl-1-oxo-octahydro-1H-indene-4-carboxyl-CoA dehydrogenase (353 aa).

FMN is bound by residues 22 to 24, 171 to 173, and 194 to 195; these read GMG, AGG, and GT.

Belongs to the nitronate monooxygenase family.

It carries out the reaction (3aS,4S,5R,7aS)-5-hydroxy-7a-methyl-1-oxo-octahydro-1H-indene-4-carboxyl-CoA + NAD(+) = (5R,7aS)-5-hydroxy-7a-methyl-1-oxo-2,3,5,6,7,7a-hexahydro-1H-indene-carboxyl-CoA + NADH + H(+). Its pathway is steroid metabolism; cholesterol degradation. Involved in the final steps of cholesterol and steroid degradation. Probably catalyzes the introduction of a double bound into the C ring of 5OH-HIC-CoA, leading to the formation of (5R,7aS)-5-hydroxy-7a-methyl-1-oxo-3,5,6,7-tetrahydro-2H-indene-4-carboxyl-CoA. The protein is (3aS,4S,5R,7aS)-5-hydroxy-7a-methyl-1-oxo-octahydro-1H-indene-4-carboxyl-CoA dehydrogenase of Rhodococcus jostii (strain RHA1).